Consider the following 344-residue polypeptide: uncharacterized protein (344 aa).

The protein belongs to the MG414/MG415 family.

This is an uncharacterized protein from Mycoplasma pneumoniae (strain ATCC 29342 / M129 / Subtype 1) (Mycoplasmoides pneumoniae).